The chain runs to 707 residues: Choline transporter-like protein 4 (707 aa).

Residues 1 to 32 (MGRKQNENEAHGNSAKYDPSFRGPIKNRGCTD) are Cytoplasmic-facing. A helical membrane pass occupies residues 33–53 (IICCVLFLIFILGYIIVGLVA). Topologically, residues 54–227 (WVYGDPRQVL…KIFEDFAQSW (174 aa)) are extracellular. Asn-67, Asn-185, Asn-195, and Asn-196 each carry an N-linked (GlcNAc...) asparagine glycan. The helical transmembrane segment at 228–248 (YWILVALGVALALSLLFILLL) threads the bilayer. The Cytoplasmic portion of the chain corresponds to 249-250 (RL). A helical membrane pass occupies residues 251-271 (VAAPLVLLLIVGVLAVLAYGI). Residues 272 to 307 (YHCWQQYQVFRDKGASITQLGFTTNFSAYQSVKETW) lie on the Extracellular side of the membrane. Asn-296 is a glycosylation site (N-linked (GlcNAc...) asparagine). A helical transmembrane segment spans residues 308–328 (LAALIVLAVLEGILLLMLIFL). Residues 329 to 356 (RQRIRIAIALLKEASRAVGQMMSTMFYP) are Cytoplasmic-facing. A helical transmembrane segment spans residues 357–377 (LVTFVLLVICIGYWAVTALYL). The Extracellular segment spans residues 378-452 (ATSGQPQYIY…GVLGLFWTVN (75 aa)). Residues Asn-391, Asn-403, and Asn-413 are each glycosylated (N-linked (GlcNAc...) asparagine). Residues 453 to 473 (WVLALGQCVLAGAFASFYWAF) traverse the membrane as a helical segment. The Cytoplasmic segment spans residues 474–498 (HKPRDIPTFPLSSAFIRTLRYHTGS). Residues 499-519 (LAFGALILSLVQIARVILEYI) form a helical membrane-spanning segment. Residues 520–557 (DHKLRGSQNPVARCIICCFKCCLWCLEKFIKFLNRNAY) lie on the Extracellular side of the membrane. A helical membrane pass occupies residues 558 to 578 (IMIAIYGKNFCVSAKNAFMLL). Residues 579–594 (MRNVLRVVVLDKVTDL) lie on the Cytoplasmic side of the membrane. The chain crosses the membrane as a helical span at residues 595-615 (LLFFGKLLVVGGVGVLSFFFF). Residues 616-635 (SGRIKGLGKDFENPNLNYYW) lie on the Extracellular side of the membrane. The helical transmembrane segment at 636-656 (LPIMTSIMGAYVIASGFFSVF) threads the bilayer. Residues 657–707 (GMCVDTLFLCFLEDLERNDGSQERPYYMPKALLKILGKKNEAPTGGKTRKK) lie on the Cytoplasmic side of the membrane.

Belongs to the CTL (choline transporter-like) family. N-glycosylated; N-glycosylation of Asn-67 and Asn-391 is required for a proper thiamine pyrophosphate uptake. In terms of tissue distribution, expressed in colon and cecum.

The protein localises to the membrane. It is found in the apical cell membrane. The catalysed reaction is choline(out) + n H(+)(in) = choline(in) + n H(+)(out). It catalyses the reaction thiamine diphosphate(out) = thiamine diphosphate(in). Functionally, choline transporter that plays a role in the choline-acetylcholine system and is required to the efferent innervation of hair cells in the olivocochlear bundle for the maintenance of physiological function of outer hair cells and the protection of hair cells from acoustic injury. Also described as a thiamine pyrophosphate transporter in colon, may mediate the absorption of microbiota-generated thiamine pyrophosphate and contribute to host thiamine (vitamin B1) homeostasis. This is Choline transporter-like protein 4 from Mus musculus (Mouse).